Here is a 35-residue protein sequence, read N- to C-terminus: Conotoxin Cal6.1d (35 aa).

A propeptide spanning residues 1 to 8 is cleaved from the precursor; the sequence is GLTRPSKR. Intrachain disulfides connect C9–C25, C16–C29, and C24–C34.

This sequence belongs to the conotoxin O1 superfamily. As to expression, expressed by the venom duct.

The protein localises to the secreted. Functionally, probable neurotoxin with unknown target. Possibly targets ion channels. The polypeptide is Conotoxin Cal6.1d (Californiconus californicus (California cone)).